Reading from the N-terminus, the 258-residue chain is Sec-independent protein translocase protein TatC (258 aa).

Residues 2-23 lie on the Cytoplasmic side of the membrane; it reads SVEDTQPLITHLIELRKRLLNC. The helical transmembrane segment at 24–44 threads the bilayer; it reads IIAVIVIFLCLVYFANDIYHL. Residues 45 to 75 lie on the Periplasmic side of the membrane; the sequence is VSAPLIKQLPQGSTMIATDVASPFFTPIKLT. A helical membrane pass occupies residues 76–96; that stretch reads FMVSLILSAPVILYQVWAFIA. Residues 97-115 are Cytoplasmic-facing; it reads PALYKHERRLVVPLLVSSS. A helical transmembrane segment spans residues 116–136; the sequence is LLFYIGMAFAYFVVFPLAFGF. At 137-156 the chain is on the periplasmic side; sequence LANTAPEGVQVSTDIASYLS. A helical transmembrane segment spans residues 157 to 177; sequence FVMALFMAFGVSFEVPVAIVL. Residues 178 to 192 lie on the Cytoplasmic side of the membrane; sequence LCWMGITSPEDLRKK. A helical transmembrane segment spans residues 193–210; sequence RPYVLVGAFVVGMLLTPP. Asp-211 is a topological domain (periplasmic). The helical transmembrane segment at 212-232 threads the bilayer; the sequence is VFSQTLLAIPMYCLFEIGVFF. Residues 233 to 258 are Cytoplasmic-facing; sequence SRFYVGKGRNREEENDAEAESEKTEE.

It belongs to the TatC family. The Tat system comprises two distinct complexes: a TatABC complex, containing multiple copies of TatA, TatB and TatC subunits, and a separate TatA complex, containing only TatA subunits. Substrates initially bind to the TatABC complex, which probably triggers association of the separate TatA complex to form the active translocon. TatC can form a distinct, stable, multimeric complex independent of TatA and TatB. Each of TatA, TatB and TatC are able to interact in pairs without the third partner. Interacts with the signal sequence of DmsA and DmsD.

Its subcellular location is the cell inner membrane. Part of the twin-arginine translocation (Tat) system that transports large folded proteins containing a characteristic twin-arginine motif in their signal peptide across membranes. Together with TatB, TatC is part of a receptor directly interacting with Tat signal peptides. This is Sec-independent protein translocase protein TatC from Escherichia coli (strain K12).